Here is a 123-residue protein sequence, read N- to C-terminus: Small ribosomal subunit protein uS12cz/uS12cy/uS12cx/uS12w (123 aa).

Over residues 1–13 the composition is skewed to polar residues; the sequence is MPTSNQLLRNSRQ. Positions 1 to 30 are disordered; sequence MPTSNQLLRNSRQPVRKTKKTPALRGCPQR. A compositionally biased stretch (basic residues) spans 14–30; sequence PVRKTKKTPALRGCPQR.

This sequence belongs to the universal ribosomal protein uS12 family. As to quaternary structure, part of the 30S ribosomal subunit.

The protein resides in the plastid. It localises to the chloroplast. Its function is as follows. With S4 and S5 plays an important role in translational accuracy. Located at the interface of the 30S and 50S subunits. This is Small ribosomal subunit protein uS12cz/uS12cy/uS12cx/uS12w (rps12-A) from Pelargonium hortorum (Common geranium).